The chain runs to 218 residues: Large ribosomal subunit protein bL25 (218 aa).

Disordered regions lie at residues M1–R20 and P185–E218. Acidic residues predominate over residues E192–E218.

It belongs to the bacterial ribosomal protein bL25 family. CTC subfamily. As to quaternary structure, part of the 50S ribosomal subunit; part of the 5S rRNA/L5/L18/L25 subcomplex. Contacts the 5S rRNA. Binds to the 5S rRNA independently of L5 and L18.

In terms of biological role, this is one of the proteins that binds to the 5S RNA in the ribosome where it forms part of the central protuberance. The sequence is that of Large ribosomal subunit protein bL25 from Desulfatibacillum aliphaticivorans.